We begin with the raw amino-acid sequence, 313 residues long: Tyrosine recombinase XerC (313 aa).

Residues 11-97 enclose the Core-binding (CB) domain; that stretch reads NSLQKPLERF…SLRSFFDFLI (87 aa). One can recognise a Tyr recombinase domain in the interval 118–298; that stretch reads PLPKNLDVDE…DFQHLAQAYD (181 aa). Residues arginine 157, lysine 181, histidine 250, arginine 253, and histidine 276 contribute to the active site. The O-(3'-phospho-DNA)-tyrosine intermediate role is filled by tyrosine 285.

It belongs to the 'phage' integrase family. XerC subfamily. In terms of assembly, forms a cyclic heterotetrameric complex composed of two molecules of XerC and two molecules of XerD.

The protein resides in the cytoplasm. Functionally, site-specific tyrosine recombinase, which acts by catalyzing the cutting and rejoining of the recombining DNA molecules. The XerC-XerD complex is essential to convert dimers of the bacterial chromosome into monomers to permit their segregation at cell division. It also contributes to the segregational stability of plasmids. This Vibrio campbellii (strain ATCC BAA-1116) protein is Tyrosine recombinase XerC.